The chain runs to 1349 residues: DNA-directed RNA polymerase subunit beta' (1349 aa).

Residues cysteine 70, cysteine 72, cysteine 85, and cysteine 88 each contribute to the Zn(2+) site. Mg(2+) contacts are provided by aspartate 460, aspartate 462, and aspartate 464. Zn(2+) contacts are provided by cysteine 801, cysteine 875, cysteine 882, and cysteine 885.

Belongs to the RNA polymerase beta' chain family. In terms of assembly, the RNAP catalytic core consists of 2 alpha, 1 beta, 1 beta' and 1 omega subunit. When a sigma factor is associated with the core the holoenzyme is formed, which can initiate transcription. Requires Mg(2+) as cofactor. Zn(2+) is required as a cofactor.

It catalyses the reaction RNA(n) + a ribonucleoside 5'-triphosphate = RNA(n+1) + diphosphate. Its function is as follows. DNA-dependent RNA polymerase catalyzes the transcription of DNA into RNA using the four ribonucleoside triphosphates as substrates. The polypeptide is DNA-directed RNA polymerase subunit beta' (Desulfotalea psychrophila (strain LSv54 / DSM 12343)).